Consider the following 428-residue polypeptide: Adenylosuccinate synthetase (428 aa).

GTP-binding positions include 12–18 and 40–42; these read GDEGKGK and GHT. The active-site Proton acceptor is Asp13. Residues Asp13 and Gly40 each contribute to the Mg(2+) site. Residues 13–16, 38–41, Thr130, Arg144, Gln225, Thr240, and Arg304 contribute to the IMP site; these read DEGK and NAGH. The active-site Proton donor is His41. Position 300 to 306 (300 to 306) interacts with substrate; it reads VTTGRSR. GTP-binding positions include Arg306, 332 to 334, and 414 to 416; these read KID and GVG.

It belongs to the adenylosuccinate synthetase family. As to quaternary structure, homodimer. It depends on Mg(2+) as a cofactor.

The protein localises to the cytoplasm. The catalysed reaction is IMP + L-aspartate + GTP = N(6)-(1,2-dicarboxyethyl)-AMP + GDP + phosphate + 2 H(+). Its pathway is purine metabolism; AMP biosynthesis via de novo pathway; AMP from IMP: step 1/2. In terms of biological role, plays an important role in the de novo pathway of purine nucleotide biosynthesis. Catalyzes the first committed step in the biosynthesis of AMP from IMP. This is Adenylosuccinate synthetase from Clostridium botulinum (strain Alaska E43 / Type E3).